The primary structure comprises 577 residues: Multidrug transporter TPO1_2 (577 aa).

Residues 1–63 form a disordered region; the sequence is MSSTSSDRPY…ALSKNSTQTS (63 aa). Asn44 and Asn58 each carry an N-linked (GlcNAc...) asparagine glycan. Helical transmembrane passes span 137–157, 167–187, 204–224, 234–254, 263–283, 293–313, 368–388, 406–426, 446–466, 475–495, 504–526, and 541–561; these read VMLC…SSIF, IYHV…LGFA, GVLV…ATAK, FFAG…FADM, AICL…VIGS, WLEY…LFFF, PLLL…YLLL, ELPY…IWWM, LLPM…FCWT, WIVP…IFLP, YLLI…GAAF, and YAGL…LLFL.

Belongs to the major facilitator superfamily. DHA1 family. Polyamines/proton antiporter (TC 2.A.1.2.16) subfamily.

The protein resides in the cell membrane. Multidrug resistance transporter involved in resistance to azole antifungal drugs such as the imidazoles miconazole, ketoconazole, and tioconazole; as well as the triazoles itraconazole and fluconazole. Also plays a role in the resistance to other antifungal drug families such as the polyene amphotericin B, the pyrimide analog flucytosine, the fungicide mancozeb, and the polyamine spermine. Decreases the intracellular accumulation of clotrimazole by mediating its extrusion from cells. Plays a role in biofilm formation. This Candida glabrata (strain ATCC 2001 / BCRC 20586 / JCM 3761 / NBRC 0622 / NRRL Y-65 / CBS 138) (Yeast) protein is Multidrug transporter TPO1_2.